Consider the following 1216-residue polypeptide: RAB11-binding protein RELCH (1216 aa).

Gly residues predominate over residues 1 to 13 (MAAMAPGGGGSGS). Disordered regions lie at residues 1-67 (MAAM…GSSA) and 133-179 (NPGN…NRAG). Position 2 is an N-acetylalanine (alanine 2). 2 positions are modified to phosphoserine: serine 20 and serine 22. Positions 21-31 (DSDEDDDEVAA) are enriched in acidic residues. Position 32 is a phosphothreonine (threonine 32). Phosphoserine occurs at positions 54 and 56. Residues 142 to 154 (GTPPGMGAPGIPG) are compositionally biased toward low complexity. Serine 180 and serine 182 each carry phosphoserine. Residue threonine 183 is modified to Phosphothreonine. Serine 186 carries the phosphoserine modification. Residues 197-231 (NRETDERVAVLEFELRKAKETIQALRANLTKAAEH) are a coiled coil. One can recognise a LisH domain in the interval 255-287 (EKRALNFLVNEFLLKNNYKLTSITFSDENDDQD). Residues 358 to 397 (LVQKLEDKISLLNNEKWSLMEQIRRLESEMDILKAEHFAT) adopt a coiled-coil conformation. Phosphoserine is present on serine 385. Residues 409–473 (VWSSQKDSED…ELPPSSVSNK (65 aa)) are disordered. A compositionally biased stretch (basic and acidic residues) spans 429–440 (DQEKTKDVHLEI). Serine 453 is modified (phosphoserine). The segment at 497–779 (CRMSADSRLG…SSKAKLHGEV (283 aa)) is interaction with RAB11A and RAB11B. 2 HEAT repeats span residues 601–639 (LLPQ…RSSL) and 640–679 (VLSM…KYQQ). Residue serine 792 is modified to Phosphoserine. The stretch at 1004-1042 (VVPALITLSSDPEISVRIATIPAFGTIMETVIQRELLER) is one HEAT 3 repeat. At serine 1149 the chain carries Phosphoserine.

In terms of assembly, interacts with RAB11A (VIA-GTP form). Interacts with RAB11B. Interacts (via the third HEAT repeat) with OSBP (via C-terminus). Found in a complex composed of RELCH, OSBP1 and RAB11A.

It is found in the recycling endosome. It localises to the golgi apparatus. Its subcellular location is the trans-Golgi network. Its function is as follows. Regulates intracellular cholesterol distribution from recycling endosomes to the trans-Golgi network through interactions with RAB11 and OSBP. Functions in membrane tethering and promotes OSBP-mediated cholesterol transfer between RAB11-bound recycling endosomes and OSBP-bound Golgi-like membranes. This is RAB11-binding protein RELCH (Relch) from Mus musculus (Mouse).